The primary structure comprises 132 residues: Small ribosomal subunit protein uS8 (132 aa).

It belongs to the universal ribosomal protein uS8 family. As to quaternary structure, part of the 30S ribosomal subunit. Contacts proteins S5 and S12.

In terms of biological role, one of the primary rRNA binding proteins, it binds directly to 16S rRNA central domain where it helps coordinate assembly of the platform of the 30S subunit. In Rickettsia bellii (strain OSU 85-389), this protein is Small ribosomal subunit protein uS8.